We begin with the raw amino-acid sequence, 200 residues long: NAD(P)H dehydrogenase (quinone) (200 aa).

Positions 4-191 (VLVLYYSSYG…GGARYQGALV (188 aa)) constitute a Flavodoxin-like domain. FMN contacts are provided by residues 10–15 (SSYGHI) and 79–81 (TRF). An NAD(+)-binding site is contributed by Tyr12. Trp99 lines the substrate pocket. FMN is bound by residues 114 to 120 (STASQHG) and His135.

Belongs to the WrbA family. FMN serves as cofactor.

It catalyses the reaction a quinone + NADH + H(+) = a quinol + NAD(+). It carries out the reaction a quinone + NADPH + H(+) = a quinol + NADP(+). The sequence is that of NAD(P)H dehydrogenase (quinone) from Rhodospirillum centenum (strain ATCC 51521 / SW).